The sequence spans 220 residues: ATP phosphoribosyltransferase (220 aa).

Belongs to the ATP phosphoribosyltransferase family. Short subfamily. In terms of assembly, heteromultimer composed of HisG and HisZ subunits.

It is found in the cytoplasm. The enzyme catalyses 1-(5-phospho-beta-D-ribosyl)-ATP + diphosphate = 5-phospho-alpha-D-ribose 1-diphosphate + ATP. It participates in amino-acid biosynthesis; L-histidine biosynthesis; L-histidine from 5-phospho-alpha-D-ribose 1-diphosphate: step 1/9. Its function is as follows. Catalyzes the condensation of ATP and 5-phosphoribose 1-diphosphate to form N'-(5'-phosphoribosyl)-ATP (PR-ATP). Has a crucial role in the pathway because the rate of histidine biosynthesis seems to be controlled primarily by regulation of HisG enzymatic activity. This is ATP phosphoribosyltransferase from Prochlorococcus marinus (strain NATL1A).